Reading from the N-terminus, the 554-residue chain is Acetyl-S-ACP:malonate ACP transferase (554 aa).

It is found in the cytoplasm. The catalysed reaction is acetyl-[ACP] + malonate = malonyl-[ACP] + acetate. Alpha subunit of the biotin-independent and biotin-dependent malonate decarboxylase multienzyme complex (EC 4.1.1.88 and EC 7.2.4.4, respectively). Acts as an acyl-carrier protein (ACP) transferase component. This first step in malonate decarboxylation involves the exchange of an acetyl thioester residue bound to the activated ACP subunit for a malonyl thioester residue. Has a weak activity with acetyl-CoA as substrate. The polypeptide is Acetyl-S-ACP:malonate ACP transferase (madA) (Malonomonas rubra).